Here is an 843-residue protein sequence, read N- to C-terminus: Eisosome protein 1 (843 aa).

Position 2 is an N-acetylserine (Ser-2). Residue Ser-2 is modified to Phosphoserine. Residues 13–44 (HNIGKTSGGGSRTSSITSSKKSLKHGSKSLRK) are disordered. The segment covering 33 to 44 (KSLKHGSKSLRK) has biased composition (basic residues). Residues Ser-88 and Ser-130 each carry the phosphoserine modification. The segment at 120–174 (KMGPKVVRNNSITSATSKTSKESQTKRKSKESPGAAASKAYSMTMETTSLSSQTN) is disordered. 2 stretches are compositionally biased toward polar residues: residues 127–137 (RNNSITSATSK) and 163–174 (TMETTSLSSQTN). Ser-182, Ser-401, Ser-584, and Ser-710 each carry phosphoserine. The interval 717 to 843 (DLPTQLEKIE…QDAISNQEKK (127 aa)) is disordered. Thr-720 bears the Phosphothreonine mark. A compositionally biased stretch (low complexity) spans 752–764 (STAAKEATETSSA). Phosphoserine is present on residues Ser-763 and Ser-775. A compositionally biased stretch (basic and acidic residues) spans 781-797 (SGKEDANDCKSAEHSKE). Residues 798–810 (ISVSQKAGNNKSL) show a composition bias toward polar residues. Phosphoserine occurs at positions 816, 828, 829, and 838.

Belongs to the EIS1 family.

It is found in the cytoplasmic granule. The protein localises to the cell membrane. In terms of biological role, required for normal formation of eisosomes, large cytoplasmic protein assemblies that localize to specialized domains on plasma membrane and mark the site of endocytosis. The polypeptide is Eisosome protein 1 (EIS1) (Saccharomyces cerevisiae (strain Lalvin EC1118 / Prise de mousse) (Baker's yeast)).